Here is a 90-residue protein sequence, read N- to C-terminus: MMADFIKYPVTTEKSYLSMFKNKQYTFDVDLRLTKPQIKKLFETLFGVNVIGINTHRPPRKKVRAGLSTGYRPAYKRVILTLKEGQSIQF.

Belongs to the universal ribosomal protein uL23 family. As to quaternary structure, part of the 50S ribosomal subunit.

The protein resides in the plastid. Its subcellular location is the chloroplast. Its function is as follows. Binds to 23S rRNA. The polypeptide is Large ribosomal subunit protein uL23c (rpl23) (Tetradesmus obliquus (Green alga)).